A 104-amino-acid polypeptide reads, in one-letter code: Pyrimidine/purine nucleoside phosphorylase (104 aa).

This sequence belongs to the nucleoside phosphorylase PpnP family.

It carries out the reaction a purine D-ribonucleoside + phosphate = a purine nucleobase + alpha-D-ribose 1-phosphate. The enzyme catalyses adenosine + phosphate = alpha-D-ribose 1-phosphate + adenine. The catalysed reaction is cytidine + phosphate = cytosine + alpha-D-ribose 1-phosphate. It catalyses the reaction guanosine + phosphate = alpha-D-ribose 1-phosphate + guanine. It carries out the reaction inosine + phosphate = alpha-D-ribose 1-phosphate + hypoxanthine. The enzyme catalyses thymidine + phosphate = 2-deoxy-alpha-D-ribose 1-phosphate + thymine. The catalysed reaction is uridine + phosphate = alpha-D-ribose 1-phosphate + uracil. It catalyses the reaction xanthosine + phosphate = alpha-D-ribose 1-phosphate + xanthine. In terms of biological role, catalyzes the phosphorolysis of diverse nucleosides, yielding D-ribose 1-phosphate and the respective free bases. Can use uridine, adenosine, guanosine, cytidine, thymidine, inosine and xanthosine as substrates. Also catalyzes the reverse reactions. This chain is Pyrimidine/purine nucleoside phosphorylase, found in Thiobacillus denitrificans (strain ATCC 25259 / T1).